We begin with the raw amino-acid sequence, 349 residues long: Isopentenyl-diphosphate delta-isomerase (349 aa).

6–7 (RK) provides a ligand contact to substrate. Residues 62 to 64 (AMT), Ser-93, and Asn-122 each bind FMN. Gln-152 lines the substrate pocket. Residue Glu-153 participates in Mg(2+) binding. Residues Lys-184, Thr-214, 258-259 (GG), and 280-281 (AG) each bind FMN.

This sequence belongs to the IPP isomerase type 2 family. Homooctamer. Dimer of tetramers. Requires FMN as cofactor. The cofactor is NADPH. Mg(2+) serves as cofactor.

It is found in the cytoplasm. It carries out the reaction isopentenyl diphosphate = dimethylallyl diphosphate. In terms of biological role, involved in the biosynthesis of isoprenoids. Catalyzes the 1,3-allylic rearrangement of the homoallylic substrate isopentenyl (IPP) to its allylic isomer, dimethylallyl diphosphate (DMAPP). The chain is Isopentenyl-diphosphate delta-isomerase from Bacillus cereus (strain ATCC 14579 / DSM 31 / CCUG 7414 / JCM 2152 / NBRC 15305 / NCIMB 9373 / NCTC 2599 / NRRL B-3711).